The chain runs to 314 residues: DNA-directed RNA polymerase subunit alpha (314 aa).

The alpha N-terminal domain (alpha-NTD) stretch occupies residues 1 to 228 (MIEIEKPKIE…EHLNIFVGLT (228 aa)). The alpha C-terminal domain (alpha-CTD) stretch occupies residues 245-314 (KEKVLEMTIE…ELGLSLRKDD (70 aa)).

This sequence belongs to the RNA polymerase alpha chain family. Homodimer. The RNAP catalytic core consists of 2 alpha, 1 beta, 1 beta' and 1 omega subunit. When a sigma factor is associated with the core the holoenzyme is formed, which can initiate transcription.

The enzyme catalyses RNA(n) + a ribonucleoside 5'-triphosphate = RNA(n+1) + diphosphate. Functionally, DNA-dependent RNA polymerase catalyzes the transcription of DNA into RNA using the four ribonucleoside triphosphates as substrates. The protein is DNA-directed RNA polymerase subunit alpha of Geobacillus thermodenitrificans (strain NG80-2).